We begin with the raw amino-acid sequence, 879 residues long: Phosphoenolpyruvate carboxylase (879 aa).

Residues histidine 138 and lysine 545 contribute to the active site.

It belongs to the PEPCase type 1 family. The cofactor is Mg(2+).

The catalysed reaction is oxaloacetate + phosphate = phosphoenolpyruvate + hydrogencarbonate. Its function is as follows. Forms oxaloacetate, a four-carbon dicarboxylic acid source for the tricarboxylic acid cycle. The protein is Phosphoenolpyruvate carboxylase of Haemophilus influenzae (strain 86-028NP).